A 418-amino-acid polypeptide reads, in one-letter code: F420-non-reducing hydrogenase vhu subunit A (418 aa).

Ni(2+) contacts are provided by Cys-61 and Cys-64.

It belongs to the [NiFe]/[NiFeSe] hydrogenase large subunit family. The F420-non-reducing hydrogenase vhu is composed of four subunits; VhuA, VhuD, VhuG and VhuU. It depends on Ni(2+) as a cofactor.

This chain is F420-non-reducing hydrogenase vhu subunit A (vhuA), found in Methanocaldococcus jannaschii (strain ATCC 43067 / DSM 2661 / JAL-1 / JCM 10045 / NBRC 100440) (Methanococcus jannaschii).